The primary structure comprises 212 residues: Translation initiation factor IF-3 (212 aa).

Positions 190–203 (LVDKNSDSQDKSVS) are enriched in basic and acidic residues. Positions 190–212 (LVDKNSDSQDKSVSEEDTNEGEQ) are disordered.

This sequence belongs to the IF-3 family. In terms of assembly, monomer.

The protein localises to the cytoplasm. Functionally, IF-3 binds to the 30S ribosomal subunit and shifts the equilibrium between 70S ribosomes and their 50S and 30S subunits in favor of the free subunits, thus enhancing the availability of 30S subunits on which protein synthesis initiation begins. The sequence is that of Translation initiation factor IF-3 from Mycoplasmopsis fermentans (Mycoplasma fermentans).